A 614-amino-acid polypeptide reads, in one-letter code: UvrABC system protein C (614 aa).

The region spanning 12–91 (ESPGVYLMKG…IKKHRPRYNL (80 aa)) is the GIY-YIG domain. Residues 201 to 236 (RDLLKTYRERMASAAANERYEEAARYRDLIRAIEVT) enclose the UVR domain.

It belongs to the UvrC family. As to quaternary structure, interacts with UvrB in an incision complex.

The protein resides in the cytoplasm. Functionally, the UvrABC repair system catalyzes the recognition and processing of DNA lesions. UvrC both incises the 5' and 3' sides of the lesion. The N-terminal half is responsible for the 3' incision and the C-terminal half is responsible for the 5' incision. The chain is UvrABC system protein C from Geobacter metallireducens (strain ATCC 53774 / DSM 7210 / GS-15).